A 184-amino-acid polypeptide reads, in one-letter code: Endoribonuclease YbeY (184 aa).

Acidic residues-rich tracts occupy residues 1-11 and 19-29; these read MTVEVGADENP and DGAGDESDDED. The segment at 1–38 is disordered; the sequence is MTVEVGADENPDFAHDETDGAGDESDDEDAQGRDPELD. 3 residues coordinate Zn(2+): His-146, His-150, and His-156.

The protein belongs to the endoribonuclease YbeY family. It depends on Zn(2+) as a cofactor.

It localises to the cytoplasm. Its function is as follows. Single strand-specific metallo-endoribonuclease involved in late-stage 70S ribosome quality control and in maturation of the 3' terminus of the 16S rRNA. In Burkholderia pseudomallei (strain K96243), this protein is Endoribonuclease YbeY.